The following is a 120-amino-acid chain: Flagellar protein FliT (120 aa).

The interval 1 to 50 (MERHQHLLSEYQQILTLSEQMLMLATVENWNALVDLEMTYLKAVENTANI) is required for homodimerization. The tract at residues 60–98 (LQELLRQKLRSILENEIEIKRLLQRRLDKLSELVGQSTR) is fliD binding.

This sequence belongs to the FliT family. As to quaternary structure, homodimer. Interacts with FliD and FlhC.

The protein resides in the cytoplasm. The protein localises to the cytosol. Its function is as follows. Dual-function protein that regulates the transcription of class 2 flagellar operons and that also acts as an export chaperone for the filament-capping protein FliD. As a transcriptional regulator, acts as an anti-FlhDC factor; it directly binds FlhC, thus inhibiting the binding of the FlhC/FlhD complex to class 2 promoters, resulting in decreased expression of class 2 flagellar operons. As a chaperone, effects FliD transition to the membrane by preventing its premature polymerization, and by directing it to the export apparatus. The chain is Flagellar protein FliT from Yersinia pestis bv. Antiqua (strain Antiqua).